A 412-amino-acid chain; its full sequence is Putative competence-damage inducible protein (412 aa).

This sequence belongs to the CinA family.

The chain is Putative competence-damage inducible protein from Bacillus thuringiensis (strain Al Hakam).